A 295-amino-acid chain; its full sequence is NAD kinase (295 aa).

Catalysis depends on aspartate 74, which acts as the Proton acceptor. Residues 74 to 75 (DG), 148 to 149 (NE), arginine 176, aspartate 178, and 189 to 194 (TAYAMS) contribute to the NAD(+) site.

Belongs to the NAD kinase family. The cofactor is a divalent metal cation.

It is found in the cytoplasm. It carries out the reaction NAD(+) + ATP = ADP + NADP(+) + H(+). Its function is as follows. Involved in the regulation of the intracellular balance of NAD and NADP, and is a key enzyme in the biosynthesis of NADP. Catalyzes specifically the phosphorylation on 2'-hydroxyl of the adenosine moiety of NAD to yield NADP. In Acidithiobacillus ferrooxidans (strain ATCC 23270 / DSM 14882 / CIP 104768 / NCIMB 8455) (Ferrobacillus ferrooxidans (strain ATCC 23270)), this protein is NAD kinase.